Reading from the N-terminus, the 598-residue chain is Arginine--tRNA ligase (598 aa).

A 'HIGH' region motif is present at residues 139–149; sequence ANPTGPMHVGH.

This sequence belongs to the class-I aminoacyl-tRNA synthetase family. Monomer.

Its subcellular location is the cytoplasm. The enzyme catalyses tRNA(Arg) + L-arginine + ATP = L-arginyl-tRNA(Arg) + AMP + diphosphate. The protein is Arginine--tRNA ligase of Bradyrhizobium sp. (strain ORS 278).